The primary structure comprises 162 residues: Caveolin-2 (162 aa).

Residues 1–86 (MGLETEKADV…FEVSKYVIYK (86 aa)) are Cytoplasmic-facing. Y19 is subject to Phosphotyrosine; by SRC. Phosphoserine occurs at positions 20 and 23. Y27 carries the post-translational modification Phosphotyrosine; by SRC. Residues 87–107 (FLTLFLAIPLAFAAGILFATL) constitute an intramembrane region (helical). The Cytoplasmic segment spans residues 108 to 162 (SCLHIWIVMPFVKTCLMVLPSVQTIWKSVTDVVIAPLCASVGRSFSSVSMQLSRD).

The protein belongs to the caveolin family. Monomer or homodimer. Interacts with CAV1; the interaction forms a stable heterooligomeric complex that is required for targeting to lipid rafts and for caveolae formation. Tyrosine phosphorylated forms do not form heterooligomers with the Tyr-19-phosphorylated form existing as a monomer or dimer, and the Tyr-27-form as a monomer only. Interacts (tyrosine phosphorylated form) with the SH2 domain-containing proteins, RASA1, NCK1 and SRC. Interacts (tyrosine phosphorylated form) with INSR, the interaction (Tyr-27-phosphorylated form) is increased on insulin stimulation. Interacts (Tyr-19 phosphorylated form) with MAPK1 (phosphorylated form); the interaction, promoted by insulin, leads to nuclear location and MAPK1 activation. Interacts with STAT3; the interaction is increased on insulin-induced tyrosine phosphorylation leading to STAT activation. In terms of processing, phosphorylated on serine and tyrosine residues. CAV1 promotes phosphorylation on Ser-23 which then targets the complex to the plasma membrane, lipid rafts and caveolae. Phosphorylation on both Tyr-19 and Tyr-27 is required for insulin-induced 'Ser-727' phosphorylation of STAT3 and its activation. Phosphorylation on Tyr-19 is required for insulin-induced phosphorylation of MAPK1 and DNA binding of STAT3. Tyrosine phosphorylation is induced by both EGF and insulin.

It localises to the nucleus. Its subcellular location is the cytoplasm. The protein localises to the golgi apparatus membrane. It is found in the cell membrane. The protein resides in the membrane. It localises to the caveola. Its function is as follows. May act as a scaffolding protein within caveolar membranes. Interacts directly with G-protein alpha subunits and can functionally regulate their activity. Acts as an accessory protein in conjunction with CAV1 in targeting to lipid rafts and driving caveolae formation. Positive regulator of cellular mitogenesis of the MAPK signaling pathway. Required for the insulin-stimulated nuclear translocation and activation of MAPK1 and STAT3, and the subsequent regulation of cell cycle progression. The protein is Caveolin-2 (CAV2) of Rhinolophus ferrumequinum (Greater horseshoe bat).